Consider the following 500-residue polypeptide: MASSSSILELNETEKELSDIFLNVSKKIGQMDRKEPEVRFAGGWVRDKLLRIESHDIDVAIDCMSGFEFAQHLQSYLAQQHPDWETKVIKIDANPLKSKHLETATARIMGMDIDIVNLRHHDYTNSNSSNKLVFGTPLEDALRRDATINALFYNLKSKTVEDFTGKGLVDLSNKIIRTPLVADETFGDDPLRAVRCIRFATKYDFNIHEETIKGLKNPELHERLRSSISRERIGVEVDKMLKHCNTNRALKIIHSLGMFACIFGPLEIHTKKLQSKNIESLSLIPYAIDLFGYLQKKDVSIKNLSSSSKYIFWLAIATLPWYNWSILEKSKIKILPPILIRDSLKYSKPIMSQVENFFVHYPLIMSKINVLEKEGKLTRLGCGRLVRELGPHWRDIIDWAFFMNTLISNSDIQRLNKDEEVTWFHVLVKHIEEYGMEEAYNIQPIINGNEITRILGIRPGPHLRKMLDDSIEWRIQNPESTKEDYIAIMLEKGTSAVVDS.

The interval 122–139 (DYTNSNSSNKLVFGTPLE) is flexible loop. The short motif at 231 to 241 (ERIGVEVDKML) is the ERhxxExxxhh motif element.

Belongs to the tRNA nucleotidyltransferase/poly(A) polymerase family.

It carries out the reaction a tRNA precursor + 2 CTP = a tRNA with a 3' CC end + 2 diphosphate. TRNA nucleotidyltransferase involved in the synthesis of the tRNA CCA terminus. In contrast to what is usually observed in eukaryotes for which one enzyme synthesizes the whole tRNA CCA terminus, in S.pombe, cca1 specifically adds two cytidine residues to a tRNA substrate lacking this sequence while cca2 specifically adds the terminal adenosine residue thereby completing the CCA sequence. The protein is tRNA nucleotidyltransferase cca1 of Schizosaccharomyces pombe (strain 972 / ATCC 24843) (Fission yeast).